A 390-amino-acid polypeptide reads, in one-letter code: Aspergillopepsin-1 (390 aa).

The first 19 residues, 1 to 19 (MVNTSLLAALTAYAVAVAA), serve as a signal peptide directing secretion. The propeptide at 20 to 67 (APTAPQVKGFSVNQVAVPKGVYRHPAAQLAKAYGKYHATVPTQVAAAA) is activation peptide. The region spanning 84–387 (YITQVTVGDD…DASGPRLGFA (304 aa)) is the Peptidase A1 domain. Active-site residues include Asp-100 and Asp-281.

It belongs to the peptidase A1 family. In terms of assembly, monomer.

The protein resides in the secreted. It carries out the reaction Hydrolysis of proteins with broad specificity. Generally favors hydrophobic residues in P1 and P1', but also accepts Lys in P1, which leads to activation of trypsinogen. Does not clot milk.. Inhibited by the microbial peptide pepstatin A. Functionally, secreted aspartic endopeptidase that allows assimilation of proteinaceous substrates. The scissile peptide bond is attacked by a nucleophilic water molecule activated by two aspartic residues in the active site. Shows a broad primary substrate specificity. Favors hydrophobic residues at the P1 and P1' positions, but also accepts a lysine residue in the P1 position, leading to the activation of trypsinogen and chymotrypsinogen A. Hydrolyzes myoglobin, hemoglobin and other natural proteins. Hydrolyzes equine myoglobin between positions 'Met-1' and 'Gly-2', 'Lys-43' and 'Phe-44', and 'Leu-70' and 'Thr-71'. This chain is Aspergillopepsin-1 (pepA), found in Aspergillus pseudoglaucus (Eurotium repens).